The sequence spans 202 residues: Ras-related protein RIC1 (202 aa).

GTP contacts are provided by residues 15–23 (GDSGVGKSC), 33–40 (YLESYIST), 63–67 (DTAGQ), 121–124 (NKCD), and 151–153 (SAK). The Effector region signature appears at 37–45 (YISTIGVDF). Over residues 174–185 (ASQPATNASKPA) the composition is skewed to polar residues. The tract at residues 174 to 202 (ASQPATNASKPATVQMRGQPVAQQSSCCS) is disordered. 2 S-geranylgeranyl cysteine lipidation sites follow: C200 and C201.

This sequence belongs to the small GTPase superfamily. Rab family.

Its subcellular location is the cell membrane. Possesses GTPase activity. This is Ras-related protein RIC1 (RIC1) from Oryza sativa subsp. japonica (Rice).